We begin with the raw amino-acid sequence, 200 residues long: Imidazole glycerol phosphate synthase subunit HisH (200 aa).

The region spanning 3–200 (DVALIDAGGA…LRNFLEMSFP (198 aa)) is the Glutamine amidotransferase type-1 domain. Residue cysteine 78 is the Nucleophile of the active site. Residues histidine 179 and glutamate 181 contribute to the active site.

Heterodimer of HisH and HisF.

Its subcellular location is the cytoplasm. It catalyses the reaction 5-[(5-phospho-1-deoxy-D-ribulos-1-ylimino)methylamino]-1-(5-phospho-beta-D-ribosyl)imidazole-4-carboxamide + L-glutamine = D-erythro-1-(imidazol-4-yl)glycerol 3-phosphate + 5-amino-1-(5-phospho-beta-D-ribosyl)imidazole-4-carboxamide + L-glutamate + H(+). The enzyme catalyses L-glutamine + H2O = L-glutamate + NH4(+). It participates in amino-acid biosynthesis; L-histidine biosynthesis; L-histidine from 5-phospho-alpha-D-ribose 1-diphosphate: step 5/9. In terms of biological role, IGPS catalyzes the conversion of PRFAR and glutamine to IGP, AICAR and glutamate. The HisH subunit catalyzes the hydrolysis of glutamine to glutamate and ammonia as part of the synthesis of IGP and AICAR. The resulting ammonia molecule is channeled to the active site of HisF. In Xanthomonas axonopodis pv. citri (strain 306), this protein is Imidazole glycerol phosphate synthase subunit HisH.